Reading from the N-terminus, the 277-residue chain is Protein EURL homolog (277 aa).

A disordered region spans residues 173–201 (LGLWPGERPQNREQRDSRQRRHSGHSREE). Residues 197–229 (HSREELMRKNVEELRQLNEQLLLQIQNVFEELS) adopt a coiled-coil conformation.

This sequence belongs to the EURL family.

Functionally, plays a role in cortical progenitor cell proliferation and differentiation. May promote dendritic spine development of post-migratory cortical projection neurons by modulating the beta-catenin signaling pathway. In Danio rerio (Zebrafish), this protein is Protein EURL homolog.